Reading from the N-terminus, the 943-residue chain is uncharacterized protein (943 aa).

Met-1 is modified (N-acetylmethionine). 5 disordered regions span residues 37 to 63 (DETP…QQQQ), 152 to 177 (KHQF…DDEV), 315 to 381 (LPMN…QQLQ), 397 to 472 (QNVP…PLKK), and 515 to 546 (EREA…ESDD). A compositionally biased stretch (polar residues) spans 41–58 (ISRNGNDSNINIQPSSVP). Over residues 152–162 (KHQFGKSKKNT) the composition is skewed to basic residues. Residues 318 to 358 (NNYNNHPGQFQNTPPVMPSGQQPPQQPRTLSLTNGPRYSPQ) show a composition bias toward polar residues. The segment covering 367 to 381 (QQISQRQQQQQQQLQ) has biased composition (low complexity). Residues 397-409 (QNVPQGFNPWSPN) show a composition bias toward polar residues. Over residues 417–433 (SMKQPISQSSISSKNNS) the composition is skewed to low complexity. The span at 434–470 (AYSIPNVQNNSLTTFSPSSPTDATAMPNSTKQGSSPL) shows a compositional bias: polar residues. Residues 515–533 (EREALVEEKEKERAEKNTE) show a composition bias toward basic and acidic residues. Phosphoserine occurs at positions 553, 586, and 619. Positions 616–639 (EFPSPGKYNSNSDNGEMNTTNEVD) are disordered. Positions 622–639 (KYNSNSDNGEMNTTNEVD) are enriched in polar residues. Ser-649 carries the phosphoserine modification. The disordered stretch occupies residues 654–683 (IPERDPKRNVSDATIKRRESDGNGRRLSNV). A compositionally biased stretch (basic and acidic residues) spans 655-677 (PERDPKRNVSDATIKRRESDGNG). Phosphoserine is present on residues Ser-681, Ser-766, and Ser-771.

This is an uncharacterized protein from Saccharomyces cerevisiae (strain ATCC 204508 / S288c) (Baker's yeast).